The sequence spans 430 residues: Adenylosuccinate synthetase (430 aa).

GTP-binding positions include 12 to 18 (GDEGKGK) and 40 to 42 (GHT). Asp-13 (proton acceptor) is an active-site residue. Residues Asp-13 and Gly-40 each coordinate Mg(2+). IMP contacts are provided by residues 13–16 (DEGK), 38–41 (NAGH), Thr-130, Arg-144, Gln-224, Thr-239, and Arg-303. The Proton donor role is filled by His-41. Residue 299–305 (TVTGRKR) coordinates substrate. Residues Arg-305, 331–333 (KLD), and 413–415 (STS) contribute to the GTP site.

It belongs to the adenylosuccinate synthetase family. In terms of assembly, homodimer. The cofactor is Mg(2+).

The protein resides in the cytoplasm. It catalyses the reaction IMP + L-aspartate + GTP = N(6)-(1,2-dicarboxyethyl)-AMP + GDP + phosphate + 2 H(+). It participates in purine metabolism; AMP biosynthesis via de novo pathway; AMP from IMP: step 1/2. Its function is as follows. Plays an important role in the de novo pathway of purine nucleotide biosynthesis. Catalyzes the first committed step in the biosynthesis of AMP from IMP. The polypeptide is Adenylosuccinate synthetase (Cereibacter sphaeroides (strain ATCC 17023 / DSM 158 / JCM 6121 / CCUG 31486 / LMG 2827 / NBRC 12203 / NCIMB 8253 / ATH 2.4.1.) (Rhodobacter sphaeroides)).